Consider the following 586-residue polypeptide: Arginine--tRNA ligase (586 aa).

The 'HIGH' region signature appears at Ala131–His141.

The protein belongs to the class-I aminoacyl-tRNA synthetase family. As to quaternary structure, monomer.

It is found in the cytoplasm. It catalyses the reaction tRNA(Arg) + L-arginine + ATP = L-arginyl-tRNA(Arg) + AMP + diphosphate. The chain is Arginine--tRNA ligase from Xanthobacter autotrophicus (strain ATCC BAA-1158 / Py2).